We begin with the raw amino-acid sequence, 414 residues long: Carboxyl-terminal-processing protease (414 aa).

A signal peptide spans 1 to 29 (MLRKRLQAGLCSLLLVLVLVFGPMERAIA). A PDZ domain is found at 100–184 (YRSLKVSTSG…STVSLTVKSP (85 aa)). Active-site charge relay system residues include Ser-310, Asp-321, and Lys-335.

Belongs to the peptidase S41A family.

The protein localises to the cellular thylakoid lumen. The enzyme catalyses The enzyme shows specific recognition of a C-terminal tripeptide, Xaa-Yaa-Zaa, in which Xaa is preferably Ala or Leu, Yaa is preferably Ala or Tyr, and Zaa is preferably Ala, but then cleaves at a variable distance from the C-terminus. A typical cleavage is -Ala-Ala-|-Arg-Ala-Ala-Lys-Glu-Asn-Tyr-Ala-Leu-Ala-Ala.. Its function is as follows. Cleavage of the 16 C-terminal residues from the D1 precursor of photosystem II (PSII). This proteolytic processing is necessary to allow the light-driven assembly of the oxygen-evolving cluster (a tetranuclear manganese), which is responsible for photosynthetic water oxidation. The polypeptide is Carboxyl-terminal-processing protease (ctpA) (Picosynechococcus sp. (strain ATCC 27264 / PCC 7002 / PR-6) (Agmenellum quadruplicatum)).